A 139-amino-acid chain; its full sequence is Plasmid stability protein StbB (139 aa).

A PINc domain is found at 2–136; that stretch reads ILLDTNVISE…EAAGLNVINP (135 aa). Aspartate 5 and aspartate 104 together coordinate Mg(2+).

Belongs to the PINc/VapC protein family. The cofactor is Mg(2+).

Functionally, toxic component of a type II toxin-antitoxin (TA) system. An RNase. Involved in plasmid stability. This chain is Plasmid stability protein StbB (stbB), found in Pseudomonas syringae pv. tomato (strain ATCC BAA-871 / DC3000).